The chain runs to 492 residues: 1-aminocyclopropane-1-carboxylate synthase 1 (492 aa).

At K277 the chain carries N6-(pyridoxal phosphate)lysine.

It belongs to the class-I pyridoxal-phosphate-dependent aminotransferase family. Homodimer. The cofactor is pyridoxal 5'-phosphate.

The catalysed reaction is S-adenosyl-L-methionine = 1-aminocyclopropane-1-carboxylate + S-methyl-5'-thioadenosine + H(+). Its pathway is alkene biosynthesis; ethylene biosynthesis via S-adenosyl-L-methionine; ethylene from S-adenosyl-L-methionine: step 1/2. Catalyzes the formation of 1-aminocyclopropane-1-carboxylate, a direct precursor of ethylene in higher plants. This chain is 1-aminocyclopropane-1-carboxylate synthase 1 (ACS1), found in Prunus mume (Japanese apricot).